We begin with the raw amino-acid sequence, 590 residues long: Leishmanolysin (590 aa).

The first 39 residues, 1 to 39 (MSVDSSSTHRHRSVAARLVRLAAAGAAVIAAVGTAAAWA), serve as a signal peptide directing secretion. The propeptide at 40 to 87 (HAGAVQHRCIHDAMQARVRQSVARHHTAPGAVSAVGLSYVTLGAAPTV) is activation peptide. 2 disulfide bridges follow: Cys-112/Cys-129 and Cys-178/Cys-217. His-251 contacts Zn(2+). The active site involves Glu-252. His-255 serves as a coordination point for Zn(2+). Asn-287 carries an N-linked (GlcNAc...) asparagine glycan. Intrachain disulfides connect Cys-301–Cys-373, Cys-380–Cys-443, Cys-393–Cys-412, Cys-402–Cys-477, Cys-454–Cys-498, Cys-503–Cys-553, and Cys-523–Cys-546. His-321 lines the Zn(2+) pocket. Residue Asn-565 is the site of GPI-anchor amidated asparagine attachment. The propeptide at 566–590 (AAAGRRGPRAAATALLVAALLAVAL) is removed in mature form.

Belongs to the peptidase M8 family. The cofactor is Zn(2+).

Its subcellular location is the cell membrane. It catalyses the reaction Preference for hydrophobic residues at P1 and P1' and basic residues at P2' and P3'. A model nonapeptide is cleaved at -Ala-Tyr-|-Leu-Lys-Lys-.. Functionally, has an integral role during the infection of macrophages in the mammalian host. This is Leishmanolysin (gp63) from Leishmania donovani.